A 61-amino-acid polypeptide reads, in one-letter code: ORF6 protein (61 aa).

The tract at residues 18–24 (IMRTFKV) is important for host Golgi localization.

Belongs to the coronaviruses accessory protein 6 family. Interacts (via C-terminus) with host RAE1 in the NUP98-RAE1 complex; this interaction disrupts the host nuclear import. Interacts with host KPNA2; this interaction may inhibit IFN-beta production by blocking IRF3 nuclear translocation.

It localises to the host endoplasmic reticulum membrane. The protein resides in the host Golgi apparatus membrane. Functionally, disrupts bidirectional nucleocytoplasmic transport by interacting with the host RAE1-NUP98 complex. Disrupts cell nuclear import complex formation by tethering karyopherin alpha 2 and karyopherin beta 1 to the membrane. Retention of import factors at the ER/Golgi membrane leads to a loss of transport into the nucleus. Prevents STAT1 nuclear translocation in response to interferon signaling, thus blocking the expression of interferon stimulated genes (ISGs) that display multiple antiviral activities. Suppresses IFN-beta production possibly by blocking IRF3 nuclear translocation. Might induce accumulation of host HNRNPA1. May play a role in viral double membrane vesicles networks to enhance viral replication. This is ORF6 protein from Homo sapiens (Human).